Consider the following 141-residue polypeptide: Keratin-associated protein 19-2 (141 aa).

The segment at 5-135 (SGYSGGLGYG…CRRSSCCGGY (131 aa)) is 48 X 2 AA repeats of G-[YCGS].

This sequence belongs to the KRTAP type 19 family. As to quaternary structure, interacts with hair keratins. Strong expression in narrowly defined pattern restricted to the lower and middle cortical regions of the hair shaft in both developing and cycling hair. During hair follicle regression (catagen), expression levels decrease until expression is no longer detectable in follicles at resting stage (telogen).

Functionally, in the hair cortex, hair keratin intermediate filaments are embedded in an interfilamentous matrix, consisting of hair keratin-associated proteins (KRTAP), which are essential for the formation of a rigid and resistant hair shaft through their extensive disulfide bond cross-linking with abundant cysteine residues of hair keratins. The matrix proteins include the high-sulfur and high-glycine-tyrosine keratins. This Mus musculus (Mouse) protein is Keratin-associated protein 19-2 (Krtap19-2).